The sequence spans 103 residues: O2 contryphan Vc1 (103 aa).

The first 23 residues, methionine 1–glycine 23, serve as a signal peptide directing secretion. Residues aspartate 24–arginine 67 constitute a propeptide that is removed on maturation. Residues glycine 25–aspartate 44 show a composition bias toward basic and acidic residues. The interval glycine 25–proline 50 is disordered. Position 68 is a pyrrolidone carboxylic acid (glutamine 68). Cysteine 70 and cysteine 83 are disulfide-bonded. The propeptide occupies arginine 99–glutamine 103.

Belongs to the O2 superfamily. Post-translationally, pyrrolidone carboxylic acid at position 1 has no significant effect on the structure of contryphan-Vc1. Expressed by the venom gland.

Its subcellular location is the secreted. Functionally, unknown. Intracranial injection of the peptide into mice does not produce toxic effects. In addition, the peptide does not produce any observable changes to normal or depolarization-induced intracellular calcium levels in mouse dorsal root ganglion cells. The protein is O2 contryphan Vc1 of Conus victoriae (Queen Victoria cone).